A 102-amino-acid chain; its full sequence is Large ribosomal subunit protein uL24 (102 aa).

This sequence belongs to the universal ribosomal protein uL24 family. Part of the 50S ribosomal subunit.

One of two assembly initiator proteins, it binds directly to the 5'-end of the 23S rRNA, where it nucleates assembly of the 50S subunit. Functionally, one of the proteins that surrounds the polypeptide exit tunnel on the outside of the subunit. The polypeptide is Large ribosomal subunit protein uL24 (Rhizobium johnstonii (strain DSM 114642 / LMG 32736 / 3841) (Rhizobium leguminosarum bv. viciae)).